Reading from the N-terminus, the 268-residue chain is Tryptophan synthase alpha chain (268 aa).

Catalysis depends on proton acceptor residues Glu-49 and Asp-60.

It belongs to the TrpA family. In terms of assembly, tetramer of two alpha and two beta chains.

The enzyme catalyses (1S,2R)-1-C-(indol-3-yl)glycerol 3-phosphate + L-serine = D-glyceraldehyde 3-phosphate + L-tryptophan + H2O. It functions in the pathway amino-acid biosynthesis; L-tryptophan biosynthesis; L-tryptophan from chorismate: step 5/5. In terms of biological role, the alpha subunit is responsible for the aldol cleavage of indoleglycerol phosphate to indole and glyceraldehyde 3-phosphate. This is Tryptophan synthase alpha chain from Aliivibrio fischeri (strain ATCC 700601 / ES114) (Vibrio fischeri).